The following is a 258-amino-acid chain: Global transcriptional regulator CodY (258 aa).

Positions 1 to 156 (MSSLLSKTRR…SATIVGMEML (156 aa)) are GAF domain. A DNA-binding region (H-T-H motif) is located at residues 204 to 223 (ASKIADKVGITRSVIVNALR).

This sequence belongs to the CodY family.

It is found in the cytoplasm. DNA-binding global transcriptional regulator which is involved in the adaptive response to starvation and acts by directly or indirectly controlling the expression of numerous genes in response to nutrient availability. During rapid exponential growth, CodY is highly active and represses genes whose products allow adaptation to nutrient depletion. The protein is Global transcriptional regulator CodY of Clostridium botulinum (strain Alaska E43 / Type E3).